We begin with the raw amino-acid sequence, 359 residues long: DNA polymerase IV (359 aa).

Residues 4-184 (IVHVDMDAFY…LPVNRIPGVG (181 aa)) enclose the UmuC domain. D8 and D102 together coordinate Mg(2+). Residue E103 is part of the active site.

The protein belongs to the DNA polymerase type-Y family. Monomer. Mg(2+) is required as a cofactor.

The protein localises to the cytoplasm. The enzyme catalyses DNA(n) + a 2'-deoxyribonucleoside 5'-triphosphate = DNA(n+1) + diphosphate. Poorly processive, error-prone DNA polymerase involved in untargeted mutagenesis. Copies undamaged DNA at stalled replication forks, which arise in vivo from mismatched or misaligned primer ends. These misaligned primers can be extended by PolIV. Exhibits no 3'-5' exonuclease (proofreading) activity. May be involved in translesional synthesis, in conjunction with the beta clamp from PolIII. This chain is DNA polymerase IV, found in Xanthomonas campestris pv. campestris (strain 8004).